Here is a 59-residue protein sequence, read N- to C-terminus: MPVPKRRMSRSNTRSRRAQWKAALPTLVRCNNPACRQPKLPHVVCPNCGTYDRRPVLSS.

Positions methionine 1–glutamine 19 are enriched in basic residues. The segment at methionine 1–tryptophan 20 is disordered.

This sequence belongs to the bacterial ribosomal protein bL32 family.

The sequence is that of Large ribosomal subunit protein bL32 from Acidothermus cellulolyticus (strain ATCC 43068 / DSM 8971 / 11B).